The primary structure comprises 407 residues: Phosphopentomutase (407 aa).

Asp10, Asp306, His311, Asp347, His348, and His359 together coordinate Mn(2+).

This sequence belongs to the phosphopentomutase family. Mn(2+) serves as cofactor.

Its subcellular location is the cytoplasm. The enzyme catalyses 2-deoxy-alpha-D-ribose 1-phosphate = 2-deoxy-D-ribose 5-phosphate. The catalysed reaction is alpha-D-ribose 1-phosphate = D-ribose 5-phosphate. It participates in carbohydrate degradation; 2-deoxy-D-ribose 1-phosphate degradation; D-glyceraldehyde 3-phosphate and acetaldehyde from 2-deoxy-alpha-D-ribose 1-phosphate: step 1/2. Its function is as follows. Isomerase that catalyzes the conversion of deoxy-ribose 1-phosphate (dRib-1-P) and ribose 1-phosphate (Rib-1-P) to deoxy-ribose 5-phosphate (dRib-5-P) and ribose 5-phosphate (Rib-5-P), respectively. In Salmonella schwarzengrund (strain CVM19633), this protein is Phosphopentomutase.